The following is a 151-amino-acid chain: Large ribosomal subunit protein uL15 (151 aa).

The interval 1-51 (MKSLRLEDAVPQSGSRHRKLRVGRGHSAGQGKTSGRGMRGQKCRSGGGVRP) is disordered. Over residues 15-24 (SRHRKLRVGR) the composition is skewed to basic residues. A compositionally biased stretch (gly residues) spans 26 to 38 (HSAGQGKTSGRGM).

The protein belongs to the universal ribosomal protein uL15 family. Part of the 50S ribosomal subunit.

Functionally, binds to the 23S rRNA. In Gloeobacter violaceus (strain ATCC 29082 / PCC 7421), this protein is Large ribosomal subunit protein uL15.